Here is a 272-residue protein sequence, read N- to C-terminus: Glutamate racemase (272 aa).

Substrate contacts are provided by residues 9-10 (DS) and 41-42 (YG). Cys73 acts as the Proton donor/acceptor in catalysis. Residue 74–75 (NT) coordinates substrate. Cys183 serves as the catalytic Proton donor/acceptor. Residue 184–185 (TH) coordinates substrate.

The protein belongs to the aspartate/glutamate racemases family.

It carries out the reaction L-glutamate = D-glutamate. Its pathway is cell wall biogenesis; peptidoglycan biosynthesis. In terms of biological role, provides the (R)-glutamate required for cell wall biosynthesis. This is Glutamate racemase from Shewanella sp. (strain MR-4).